A 387-amino-acid polypeptide reads, in one-letter code: 3-ketoacyl-CoA thiolase (387 aa).

Residue Cys-91 is the Acyl-thioester intermediate of the active site. Active-site proton acceptor residues include His-343 and Cys-373.

Belongs to the thiolase-like superfamily. Thiolase family. As to quaternary structure, heterotetramer of two alpha chains (FadB) and two beta chains (FadA).

It localises to the cytoplasm. It carries out the reaction an acyl-CoA + acetyl-CoA = a 3-oxoacyl-CoA + CoA. It functions in the pathway lipid metabolism; fatty acid beta-oxidation. Functionally, catalyzes the final step of fatty acid oxidation in which acetyl-CoA is released and the CoA ester of a fatty acid two carbons shorter is formed. The chain is 3-ketoacyl-CoA thiolase from Escherichia coli (strain UTI89 / UPEC).